The sequence spans 158 residues: MTRLLGIIRIRGYAGTPWYIQDTLKMLRLPRRFNAMVYEDSSSIRGMLKIAEPYITWGELNEEGLKLLLTRLHTKIGNLKITDDILKSQLKIESYNLFVKKIMDGEIKLHKLDDYFKLPIRLHPPSGGFKGKINRPFSVKGEFGYRGEKINELIKRMV.

The protein belongs to the universal ribosomal protein uL30 family. Part of the 50S ribosomal subunit.

The protein is Large ribosomal subunit protein uL30 of Sulfurisphaera tokodaii (strain DSM 16993 / JCM 10545 / NBRC 100140 / 7) (Sulfolobus tokodaii).